Here is a 323-residue protein sequence, read N- to C-terminus: Dehydrogenase/reductase SDR family member 7B (323 aa).

The Cytoplasmic portion of the chain corresponds to 1–4 (MDLT). The chain crosses the membrane as a helical; Signal-anchor for type II membrane protein span at residues 5-25 (SWAIFPLLLASIGVYGLYKLL). Residues 26-272 (QKLRSGAYLQ…AVGERRKELL (247 aa)) are Lumenal-facing. NAD(+)-binding residues include Ser-46 and Leu-48. Substrate is bound at residue Ser-178. Positions 191, 195, and 226 each coordinate NAD(+). Tyr-191 acts as the Proton acceptor in catalysis.

It belongs to the short-chain dehydrogenases/reductases (SDR) family.

It localises to the endoplasmic reticulum membrane. Its function is as follows. Putative oxidoreductase. The sequence is that of Dehydrogenase/reductase SDR family member 7B (dhrs7b) from Xenopus laevis (African clawed frog).